The following is a 432-amino-acid chain: Homogentisate 1,2-dioxygenase (432 aa).

The active-site Proton acceptor is H287. 2 residues coordinate Fe cation: H330 and E336. Residues Y345 and H366 each contribute to the homogentisate site. H366 contacts Fe cation.

Belongs to the homogentisate dioxygenase family. Hexamer; dimer of trimers. Fe cation is required as a cofactor.

The catalysed reaction is homogentisate + O2 = 4-maleylacetoacetate + H(+). It functions in the pathway amino-acid degradation; L-phenylalanine degradation; acetoacetate and fumarate from L-phenylalanine: step 4/6. Involved in the catabolism of homogentisate (2,5-dihydroxyphenylacetate or 2,5-OH-PhAc), a central intermediate in the degradation of phenylalanine and tyrosine. Catalyzes the oxidative ring cleavage of the aromatic ring of homogentisate to yield maleylacetoacetate. The sequence is that of Homogentisate 1,2-dioxygenase from Pseudomonas aeruginosa (strain UCBPP-PA14).